Here is a 201-residue protein sequence, read N- to C-terminus: Homeobox protein goosecoid-2 (201 aa).

Disordered stretches follow at residues 1–55 (MATA…PEAP), 95–124 (PATP…RRTR), and 179–201 (RHQK…KESC). Residues 95–106 (PATPSPLTAPRA) are compositionally biased toward low complexity. Residues 123–182 (TRRHRTIFSEEQLQALEALFVQNQYPDVGTRERLAVRIRLREERVEVWFKNRRAKWRHQK) constitute a DNA-binding region (homeobox).

The protein belongs to the paired homeobox family. Bicoid subfamily. In terms of tissue distribution, expressed in adult testis.

Its subcellular location is the nucleus. May have a role in development. May regulate its own transcription. May bind the bicoid consensus sequence TAATCC. This chain is Homeobox protein goosecoid-2 (Gsc2), found in Mus musculus (Mouse).